We begin with the raw amino-acid sequence, 100 residues long: uncharacterized protein (100 aa).

An N-terminal signal peptide occupies residues 1-18 (MWGFLVLKARWLVTPVRT). Positions 48-86 (LTRGVIRVSPQERSQQNQSAPKGPTPSTRPKPRTLGPQA) are disordered. Residues 58–69 (QERSQQNQSAPK) show a composition bias toward polar residues. N-linked (GlcNAc...) asparagine glycosylation occurs at asparagine 64.

Its subcellular location is the secreted. This is an uncharacterized protein from Homo sapiens (Human).